The chain runs to 365 residues: Endophilin-B1 (365 aa).

Met-1 carries the post-translational modification N-acetylmethionine. Residues 1-30 are membrane-binding amphipathic helix; it reads MNIMDFNVKKLAADAGTFLSRAVQFTEEKL. The required for membrane binding stretch occupies residues 1-37; it reads MNIMDFNVKKLAADAGTFLSRAVQFTEEKLGQAEKTE. Positions 27–261 constitute a BAR domain; that stretch reads EEKLGQAEKT…LGSFPSNYLS (235 aa). At Thr-145 the chain carries Phosphothreonine; by CDK5. Positions 155–195 form a coiled coil; the sequence is YKTIAKERKLLQNKRLDLDAAKTRLKKAKAAETRNSSEQEL. The SH3 domain occupies 305-365; sequence SGSRKARVLY…VPITYLELLN (61 aa).

The protein belongs to the endophilin family. As to quaternary structure, homodimer, and heterodimer with SH3GLB2. Binds BAX; induction of apoptosis augments BAX binding. Binds DNM1, HTT, AMPH, BIN1 and ARFGAP1. Interacts with UVRAG; UVRAG bridges the interaction to BECN1 indicative for an association with the PI3K complex II (PI3KC3-C2). In terms of processing, phosphorylated at Thr-145 by CDK5; this phosphorylation is required for autophagy induction in starved neurons and facilitates homodimerization. Highly expressed in heart, skeletal muscle, kidney and placenta. Detected at lower levels in brain, colon, thymus, spleen, liver, small intestine, lung and peripheral blood leukocytes.

The protein resides in the cytoplasm. The protein localises to the golgi apparatus membrane. Its subcellular location is the mitochondrion outer membrane. It localises to the cytoplasmic vesicle. It is found in the autophagosome membrane. The protein resides in the midbody. May be required for normal outer mitochondrial membrane dynamics. Required for coatomer-mediated retrograde transport in certain cells. May recruit other proteins to membranes with high curvature. May promote membrane fusion. Involved in activation of caspase-dependent apoptosis by promoting BAX/BAK1 activation. Isoform 1 acts proapoptotic in fibroblasts. Involved in caspase-independent apoptosis during nutrition starvation and involved in the regulation of autophagy. Activates lipid kinase activity of PIK3C3 during autophagy probably by associating with the PI3K complex II (PI3KC3-C2). Associated with PI3KC3-C2 during autophagy may regulate the trafficking of ATG9A from the Golgi complex to the peripheral cytoplasm for the formation of autophagosomes by inducing Golgi membrane tubulation and fragmentation. Involved in regulation of degradative endocytic trafficking and cytokinesis, probably in the context of PI3KC3-C2. Isoform 2 acts antiapoptotic in neuronal cells; involved in maintenance of mitochondrial morphology and promotes neuronal viability. The polypeptide is Endophilin-B1 (SH3GLB1) (Homo sapiens (Human)).